The following is a 507-amino-acid chain: MGSSFETIDIATSARRIGVDNRISLKFYFRIADNILKQANIFRAEKNVIDLYVMLLRFSSLALETIPSHRDYRTSLKSNKEYLRMRLLDVLTELEKLKPVVQQRIDELYPKLKPRYNVQAHPANGSLGWSSAVKPSFNSYDHAKVRNPPGHNSGYMGSRGQQFLNAAPLEERFRKMSVNFRPNEETLSKHSILGPGGLSAQWQPPKYDTKVQYPSNIDFSPVVIPSFQQLVDSKPMITNGSNDEPEKPIVEPSVASNEKIQKNYTEELSSMISFEEPESVNENNLIRQPSPPPVLAEVQDLVPALCPEVREPECMIENSLPDESLRSESPLELHIATSMMDTFMRLAKSNTKKNLETCGILAGSLKNRKFYITALIIPKQESTSDSCQATNEEEIFEVQDKQSLFPLGWIHTHPTQSCFMSSIDVHTHYSYQIMLPEAVAIVMAPQDSSRNHGIFRLTTPGGMTVIRNCDRRGFHAHSSPEDGGPIYNTCKEVYMNPNLKFDVIDLR.

One can recognise an MPN domain in the interval 333-463 (LHIATSMMDT…IFRLTTPGGM (131 aa)). Residues histidine 411, histidine 413, aspartate 424, histidine 426, cysteine 469, histidine 475, and histidine 477 each coordinate Zn(2+). Positions 411-424 (HTHPTQSCFMSSID) match the JAMM motif motif.

This sequence belongs to the peptidase M67C family. It depends on Zn(2+) as a cofactor.

It is found in the membrane. The protein resides in the cytoplasm. In terms of biological role, zinc metalloprotease that cleaves 'Lys-48'- and 'Lys-63'-linked polyubiquitin chains. The sequence is that of AMSH-like ubiquitin thioesterase 1 (AMSH1) from Arabidopsis thaliana (Mouse-ear cress).